We begin with the raw amino-acid sequence, 212 residues long: Disintegrin-like halysetin (212 aa).

Residues 4–90 enclose the Disintegrin domain; the sequence is PPVCGNELLE…ECPADVFHKN (87 aa). Cystine bridges form between C7/C26, C18/C36, C62/C82, C69/C94, C101/C106, C113/C128, C151/C158, C163/C174, and C200/C205. A D/ECD-tripeptide motif is present at residues 68-70; it reads ECD.

Belongs to the venom metalloproteinase (M12B) family. P-III subfamily. P-IIIb sub-subfamily. As to quaternary structure, monomer. As to expression, expressed by the venom gland.

The protein localises to the secreted. Functionally, inhibits human platelet aggregation stimulated by collagen with an IC(50) of 420 nM. This is Disintegrin-like halysetin from Gloydius halys (Chinese water mocassin).